We begin with the raw amino-acid sequence, 1057 residues long: Outer capsid protein VP2 (1057 aa).

It belongs to the orbivirus VP2 family.

It localises to the virion. Its function is as follows. The VP2 protein is one of the two proteins (with VP5) which constitute the virus particle outer capsid. It is the major target of the host immunogenic response. The sequence is that of Outer capsid protein VP2 (Segment-2) from Anas (ducks).